A 278-amino-acid chain; its full sequence is MIQSTQTWRVLAGGLAATAMGVTVFAGGTAAADPSPPAPPPAIPGVLPPASLPPIQSVTAVPGGITTNNRFVATPQAPGPAALGQPPLAVAAPVSESLHDYFKAKNIKLVAQKPHGFKALDITLPVPTRWTQVPDPNVPDAFAVIADRLGNSLYTSNAQLVVYNLVGNFDPKEAITHGFVDTQQLSAWQTTNASKADFDGFPSSIIEGTYRENGMTLNTSRRHVIASSGPDKYLVSLSVTTALSQAVADAPATNAIVNGFRVSSPTVSAPVPPQLGTR.

The signal sequence occupies residues Met1 to Gly28.

The protein to M.tuberculosis Rv0040c.

This Mycobacterium leprae (strain TN) protein is Proline-rich 28 kDa antigen homolog.